The following is a 179-amino-acid chain: Large ribosomal subunit protein uL5c (179 aa).

Belongs to the universal ribosomal protein uL5 family. In terms of assembly, part of the 50S ribosomal subunit; contacts the 5S rRNA.

The protein resides in the plastid. Its subcellular location is the chloroplast. In terms of biological role, binds 5S rRNA, forms part of the central protuberance of the 50S subunit. This chain is Large ribosomal subunit protein uL5c (rpl5), found in Euglena gracilis.